The sequence spans 497 residues: MREIVTLQLGQLSNYTATHFWNAQESYFTYSSDEKSLIDHNVHWRAGLGADGSETFLPRTVIYDLKGGFGSLRKINALYEAESESAPEALWSGQSVVHKQTPITPSEYQQSLDAGSEPAQLTTSNVRYWSDFSRVYFHPKSLNQLYDFELNSTTMPFERFSMGTELFSMLDREHDLADRDFRPFAEECDRMQGIQVFTTIDDAWGGFTSSYLESLRDDFPKTTIWTWGLQSPLLDISRAKRQLRLVNTAHSIEQLCTQSTTVVPLALPEEDMTTSVSMDRRSPWHTSALMAAAIETATLPSRLTQGSSEQAGSLDVLAESLNVNGNQPLASMRMSLAPAKDSPEDSRINVDFFQVGRVWSRQHVARLDTHKHVFGEILSYRDLDPLGHDNENGHLAPGERPIIGNSIVRKYDSALRFPLLDAYPQIYPQLAGNSDASLQTTLSTNSSIVQRIRTLRTESARLVPVNEREDLGNGLADLADAYQEGWFSGSDEDDDDL.

The protein belongs to the misato family.

The protein resides in the mitochondrion. Functionally, involved in the partitioning of the mitochondrial organelle and mitochondrial DNA (mtDNA) inheritance. This is Protein DML1 (DML1) from Gibberella zeae (strain ATCC MYA-4620 / CBS 123657 / FGSC 9075 / NRRL 31084 / PH-1) (Wheat head blight fungus).